The chain runs to 464 residues: Cysteine--tRNA ligase 1 (464 aa).

Cysteine 28 contributes to the Zn(2+) binding site. The 'HIGH' region motif lies at 30–40 (VTIYDLCHIGH). Zn(2+) contacts are provided by cysteine 209, histidine 234, and glutamate 238. The short motif at 266-270 (KMSKS) is the 'KMSKS' region element. Lysine 269 contacts ATP.

This sequence belongs to the class-I aminoacyl-tRNA synthetase family. In terms of assembly, monomer. Zn(2+) is required as a cofactor.

Its subcellular location is the cytoplasm. It catalyses the reaction tRNA(Cys) + L-cysteine + ATP = L-cysteinyl-tRNA(Cys) + AMP + diphosphate. This Photobacterium profundum (strain SS9) protein is Cysteine--tRNA ligase 1.